We begin with the raw amino-acid sequence, 345 residues long: S-adenosylmethionine:tRNA ribosyltransferase-isomerase (345 aa).

The protein belongs to the QueA family. In terms of assembly, monomer.

Its subcellular location is the cytoplasm. The catalysed reaction is 7-aminomethyl-7-carbaguanosine(34) in tRNA + S-adenosyl-L-methionine = epoxyqueuosine(34) in tRNA + adenine + L-methionine + 2 H(+). It participates in tRNA modification; tRNA-queuosine biosynthesis. Functionally, transfers and isomerizes the ribose moiety from AdoMet to the 7-aminomethyl group of 7-deazaguanine (preQ1-tRNA) to give epoxyqueuosine (oQ-tRNA). This chain is S-adenosylmethionine:tRNA ribosyltransferase-isomerase, found in Shewanella baltica (strain OS155 / ATCC BAA-1091).